Here is a 503-residue protein sequence, read N- to C-terminus: ATP synthase subunit alpha (503 aa).

170–177 contacts ATP; that stretch reads GDKQTGKT.

It belongs to the ATPase alpha/beta chains family. In terms of assembly, F-type ATPases have 2 components, CF(1) - the catalytic core - and CF(0) - the membrane proton channel. CF(1) has five subunits: alpha(3), beta(3), gamma(1), delta(1), epsilon(1). CF(0) has three main subunits: a(1), b(2) and c(9-12). The alpha and beta chains form an alternating ring which encloses part of the gamma chain. CF(1) is attached to CF(0) by a central stalk formed by the gamma and epsilon chains, while a peripheral stalk is formed by the delta and b chains.

It localises to the cell inner membrane. The catalysed reaction is ATP + H2O + 4 H(+)(in) = ADP + phosphate + 5 H(+)(out). Functionally, produces ATP from ADP in the presence of a proton gradient across the membrane. The alpha chain is a regulatory subunit. The chain is ATP synthase subunit alpha from Helicobacter pylori (strain P12).